We begin with the raw amino-acid sequence, 277 residues long: Diaminopimelate epimerase (277 aa).

Substrate is bound by residues Asn-11 and Asn-62. Residue Cys-71 is the Proton donor of the active site. Residues 72–73 (GN), Asn-160, Asn-193, and 211–212 (ER) contribute to the substrate site. The active-site Proton acceptor is Cys-220. 221–222 (GT) contributes to the substrate binding site.

The protein belongs to the diaminopimelate epimerase family. Homodimer.

The protein localises to the cytoplasm. It catalyses the reaction (2S,6S)-2,6-diaminopimelate = meso-2,6-diaminopimelate. The protein operates within amino-acid biosynthesis; L-lysine biosynthesis via DAP pathway; DL-2,6-diaminopimelate from LL-2,6-diaminopimelate: step 1/1. Its function is as follows. Catalyzes the stereoinversion of LL-2,6-diaminopimelate (L,L-DAP) to meso-diaminopimelate (meso-DAP), a precursor of L-lysine. In Methanococcus maripaludis (strain C5 / ATCC BAA-1333), this protein is Diaminopimelate epimerase.